The following is a 339-amino-acid chain: MIRVAAAGGGTGGHLYPLLAILETLSKDVETKVLFFAVKGKIDEKVVKQEHPEYEVVTLDVRGLFRPLYHPKNFWRAAKVVNAILKAKKELLRFKPDVIVLTGGYISGVVGLAAKNMGVPIFLHEQNVVPGLAVKTVAKYARKIFVSFERTREFLTEWKDRVLFTGCPVRETKEEVDLEDFVLVLGGSLGSDLINSLMEEVYRRISCIRFVHSTGSRRWAERLSVFPNVTAHPYIENMSSFWKKARASISRAGASTIGEMIYYGVPGVLIPWEGSAESHQLENALEAERLGYAIVVREKEATPQKIIEAIDKTMKKGKIEKMKENPATIISREILGEIR.

UDP-N-acetyl-alpha-D-glucosamine is bound by residues 11–13 (TGG), N127, R170, S188, I235, and Q280.

The protein belongs to the glycosyltransferase 28 family. MurG subfamily.

The protein resides in the cell inner membrane. It catalyses the reaction di-trans,octa-cis-undecaprenyl diphospho-N-acetyl-alpha-D-muramoyl-L-alanyl-D-glutamyl-meso-2,6-diaminopimeloyl-D-alanyl-D-alanine + UDP-N-acetyl-alpha-D-glucosamine = di-trans,octa-cis-undecaprenyl diphospho-[N-acetyl-alpha-D-glucosaminyl-(1-&gt;4)]-N-acetyl-alpha-D-muramoyl-L-alanyl-D-glutamyl-meso-2,6-diaminopimeloyl-D-alanyl-D-alanine + UDP + H(+). The protein operates within cell wall biogenesis; peptidoglycan biosynthesis. Functionally, cell wall formation. Catalyzes the transfer of a GlcNAc subunit on undecaprenyl-pyrophosphoryl-MurNAc-pentapeptide (lipid intermediate I) to form undecaprenyl-pyrophosphoryl-MurNAc-(pentapeptide)GlcNAc (lipid intermediate II). The chain is UDP-N-acetylglucosamine--N-acetylmuramyl-(pentapeptide) pyrophosphoryl-undecaprenol N-acetylglucosamine transferase from Thermotoga neapolitana (strain ATCC 49049 / DSM 4359 / NBRC 107923 / NS-E).